We begin with the raw amino-acid sequence, 89 residues long: Small ribosomal subunit protein uS15 (89 aa).

This sequence belongs to the universal ribosomal protein uS15 family. As to quaternary structure, part of the 30S ribosomal subunit. Forms a bridge to the 50S subunit in the 70S ribosome, contacting the 23S rRNA.

One of the primary rRNA binding proteins, it binds directly to 16S rRNA where it helps nucleate assembly of the platform of the 30S subunit by binding and bridging several RNA helices of the 16S rRNA. In terms of biological role, forms an intersubunit bridge (bridge B4) with the 23S rRNA of the 50S subunit in the ribosome. This is Small ribosomal subunit protein uS15 from Prosthecochloris aestuarii (strain DSM 271 / SK 413).